Reading from the N-terminus, the 378-residue chain is Cytochrome b (378 aa).

The next 4 membrane-spanning stretches (helical) occupy residues 34-54 (FGSL…FLAM), 78-99 (WFLR…FIHV), 114-134 (WNTG…GYVL), and 179-199 (FFTF…IHLL). 2 residues coordinate heme b: His84 and His98. Positions 183 and 197 each coordinate heme b. Position 202 (His202) interacts with a ubiquinone. 4 helical membrane-spanning segments follow: residues 227 to 247 (YKDI…IWKF), 289 to 309 (LGGV…PFTH), 321 to 341 (LNQI…WIGA), and 348 to 368 (YILT…INPL).

It belongs to the cytochrome b family. In terms of assembly, the main subunits of complex b-c1 are: cytochrome b, cytochrome c1 and the Rieske protein. Heme b serves as cofactor.

Its subcellular location is the mitochondrion inner membrane. In terms of biological role, component of the ubiquinol-cytochrome c reductase complex (complex III or cytochrome b-c1 complex) that is part of the mitochondrial respiratory chain. The b-c1 complex mediates electron transfer from ubiquinol to cytochrome c. Contributes to the generation of a proton gradient across the mitochondrial membrane that is then used for ATP synthesis. This is Cytochrome b (mt:Cyt-b) from Anopheles gambiae (African malaria mosquito).